Consider the following 347-residue polypeptide: Spermidine/putrescine import ATP-binding protein PotA (347 aa).

The 231-residue stretch at 6–236 folds into the ABC transporter domain; it reads IELRDISKHY…PKNSFVAKFI (231 aa). 38–45 provides a ligand contact to ATP; it reads GPSGCGKT.

The protein belongs to the ABC transporter superfamily. Spermidine/putrescine importer (TC 3.A.1.11.1) family. In terms of assembly, the complex is composed of two ATP-binding proteins (PotA), two transmembrane proteins (PotB and PotC) and a solute-binding protein (PotD).

The protein resides in the cell membrane. It carries out the reaction ATP + H2O + polyamine-[polyamine-binding protein]Side 1 = ADP + phosphate + polyamineSide 2 + [polyamine-binding protein]Side 1.. Part of the ABC transporter complex PotABCD involved in spermidine/putrescine import. Responsible for energy coupling to the transport system. This Clostridioides difficile (strain 630) (Peptoclostridium difficile) protein is Spermidine/putrescine import ATP-binding protein PotA.